Here is a 132-residue protein sequence, read N- to C-terminus: Holo-[acyl-carrier-protein] synthase (132 aa).

Mg(2+) is bound by residues D8 and E62.

It belongs to the P-Pant transferase superfamily. AcpS family. It depends on Mg(2+) as a cofactor.

The protein localises to the cytoplasm. The catalysed reaction is apo-[ACP] + CoA = holo-[ACP] + adenosine 3',5'-bisphosphate + H(+). In terms of biological role, transfers the 4'-phosphopantetheine moiety from coenzyme A to a Ser of acyl-carrier-protein. The protein is Holo-[acyl-carrier-protein] synthase of Leptothrix cholodnii (strain ATCC 51168 / LMG 8142 / SP-6) (Leptothrix discophora (strain SP-6)).